The following is a 164-amino-acid chain: uncharacterized protein (164 aa).

A compositionally biased stretch (polar residues) spans 1–29 (MLCVRSSSSNLESDTYLSRYSTRASAGTG). The interval 1-62 (MLCVRSSSSN…SKPSNNKNID (62 aa)) is disordered. The segment covering 43–62 (SSDSSSSSSESKPSNNKNID) has biased composition (low complexity).

This is an uncharacterized protein from Schizosaccharomyces pombe (strain 972 / ATCC 24843) (Fission yeast).